Consider the following 175-residue polypeptide: MSQALTLARPYGRAAFAIAREGGNFAPWSDALAFSAQVAGDPRVAALLLNPALGQEQAVTLLAPPQAGEDYLRFLGVLADAQRLSLLPEVAGLYEQLRAEAEHVVKATVTSAAAMSQTELDTIAAALKKRFGRDVDITTAVDASLIGGAVIDTGDVVIDGSLKGKLARLQSSLAH.

The protein belongs to the ATPase delta chain family. As to quaternary structure, F-type ATPases have 2 components, F(1) - the catalytic core - and F(0) - the membrane proton channel. F(1) has five subunits: alpha(3), beta(3), gamma(1), delta(1), epsilon(1). F(0) has three main subunits: a(1), b(2) and c(10-14). The alpha and beta chains form an alternating ring which encloses part of the gamma chain. F(1) is attached to F(0) by a central stalk formed by the gamma and epsilon chains, while a peripheral stalk is formed by the delta and b chains.

Its subcellular location is the cell inner membrane. Functionally, f(1)F(0) ATP synthase produces ATP from ADP in the presence of a proton or sodium gradient. F-type ATPases consist of two structural domains, F(1) containing the extramembraneous catalytic core and F(0) containing the membrane proton channel, linked together by a central stalk and a peripheral stalk. During catalysis, ATP synthesis in the catalytic domain of F(1) is coupled via a rotary mechanism of the central stalk subunits to proton translocation. In terms of biological role, this protein is part of the stalk that links CF(0) to CF(1). It either transmits conformational changes from CF(0) to CF(1) or is implicated in proton conduction. This chain is ATP synthase subunit delta, found in Xanthomonas euvesicatoria pv. vesicatoria (strain 85-10) (Xanthomonas campestris pv. vesicatoria).